Reading from the N-terminus, the 244-residue chain is MTLDLDAHKKDDKLLITTIQQEYKILAEYKMIESEKLSGIYVIPSYANSLQWFGVFFGRQGLYAESVFRFTILLPDRFPDDKSLPTIIFQQDVIHPHVCPYTHSLDVSHAFPEWRCGEDHLWQLLKYLQVIFSDPLDSIRGIEVDKLKNREAAELLMNNKEEYVARVQENIKESKEHIFDTPPTEDPNYIVFEKFQQDVHGPVLDRIKAGRSKQTEPSAQQGNGGHATGLSWVKEGEFKPLSIE.

The UBC core domain occupies 20–176; that stretch reads QQEYKILAEY…VQENIKESKE (157 aa). The segment at 209–244 is disordered; sequence AGRSKQTEPSAQQGNGGHATGLSWVKEGEFKPLSIE.

It belongs to the ubiquitin-conjugating enzyme family. FTS subfamily.

This Drosophila sechellia (Fruit fly) protein is Protein crossbronx (cbx).